Consider the following 153-residue polypeptide: SsrA-binding protein (153 aa).

The segment at 129-153 (KREDMKKKDQSREMAQALRERSKSH) is disordered.

The protein belongs to the SmpB family.

The protein resides in the cytoplasm. Required for rescue of stalled ribosomes mediated by trans-translation. Binds to transfer-messenger RNA (tmRNA), required for stable association of tmRNA with ribosomes. tmRNA and SmpB together mimic tRNA shape, replacing the anticodon stem-loop with SmpB. tmRNA is encoded by the ssrA gene; the 2 termini fold to resemble tRNA(Ala) and it encodes a 'tag peptide', a short internal open reading frame. During trans-translation Ala-aminoacylated tmRNA acts like a tRNA, entering the A-site of stalled ribosomes, displacing the stalled mRNA. The ribosome then switches to translate the ORF on the tmRNA; the nascent peptide is terminated with the 'tag peptide' encoded by the tmRNA and targeted for degradation. The ribosome is freed to recommence translation, which seems to be the essential function of trans-translation. This Geobacter metallireducens (strain ATCC 53774 / DSM 7210 / GS-15) protein is SsrA-binding protein.